We begin with the raw amino-acid sequence, 240 residues long: MATTWPPCRIIRKSGGLRGMWTLEYELQRSGLGPVAGVDEVGRGACAGPLVVAACVLGPGRLEESLDDSKKLSAKGREMLFPLICRYALAYHVVFIPSVEVDRHGVQVANIEGMRRAVAGLSVRPGYVLSDGFRVPGLSVPSLPVVGGDAVVACIAAASVLAKVSRDRLMVAMDADYPGYGFAAHKGYCTRAHSLALTQLGPCPEHRYSFINVRRIVTRSNTRAVAGFTPAPPAEHGECR.

The RNase H type-2 domain maps to 33 to 222; it reads GPVAGVDEVG…VRRIVTRSNT (190 aa). A divalent metal cation-binding residues include D39, E40, and D131.

This sequence belongs to the RNase HII family. Mn(2+) is required as a cofactor. It depends on Mg(2+) as a cofactor.

The protein localises to the cytoplasm. It carries out the reaction Endonucleolytic cleavage to 5'-phosphomonoester.. Its function is as follows. Endonuclease that specifically degrades the RNA of RNA-DNA hybrids. The polypeptide is Ribonuclease HII (Mycobacterium leprae (strain Br4923)).